The primary structure comprises 203 residues: MAEVQVLVLDGRGHLLGRLAAIVAKQVLLGRKVVVVRCEGINISGNFYRNKLKYLAFLRKRMNTNPSRGPYHFRAPSRIFWRTVRGMLPHKTKRGQAALDRLKVFDGIPPPYDKKKRMVVPAALKVVRLKPTRKFAYLGRLAHEVGWKYQAVTATLEEKRKEKAKIHYRKKKQLMRLRKQAEKNVEKKIDKYTEVLKTHGLLV.

Alanine 2 bears the N-acetylalanine mark. Position 59 is a citrulline (arginine 59). A Phosphoserine; by ZIPK/DAPK3 modification is found at serine 77. Position 140 is a citrulline (arginine 140). Lysine 191 is modified (N6-acetyllysine).

Belongs to the universal ribosomal protein uL13 family. Component of the 60S ribosome. Component of the GAIT complex. Interacts with EIF4G1. Phosphorylation at Ser-77 upon interferon-gamma treatment in monocytes involves a DAPK1-DAPK3 kinase cascade and is causing release from the ribosome, association with the GAIT complex and subsequent involvement in transcript-selective translation inhibition. In terms of processing, citrullinated by PADI4.

Its subcellular location is the cytoplasm. Its function is as follows. Associated with ribosomes but is not required for canonical ribosome function and has extra-ribosomal functions. Component of the GAIT (gamma interferon-activated inhibitor of translation) complex which mediates interferon-gamma-induced transcript-selective translation inhibition in inflammation processes. Upon interferon-gamma activation and subsequent phosphorylation dissociates from the ribosome and assembles into the GAIT complex which binds to stem loop-containing GAIT elements in the 3'-UTR of diverse inflammatory mRNAs (such as ceruplasmin) and suppresses their translation. In the GAIT complex interacts with m7G cap-bound eIF4G at or near the eIF3-binding site and blocks the recruitment of the 43S ribosomal complex. Involved in methylation of rRNA. This chain is Large ribosomal subunit protein uL13 (RPL13A), found in Homo sapiens (Human).